A 117-amino-acid polypeptide reads, in one-letter code: G antigen 4 (117 aa).

Positions 1–117 (MSWRGRSTYY…PEEGEKQSQC (117 aa)) are disordered. 2 stretches are compositionally biased toward acidic residues: residues 32–45 (FSDE…EEGE) and 87–96 (ECEDGPDGQE). Positions 103 to 117 (EEVKTPEEGEKQSQC) are enriched in basic and acidic residues.

This sequence belongs to the GAGE family. In terms of tissue distribution, expressed in a variety of tumor tissues but not in normal tissues, except testis.

Its function is as follows. Antigen, recognized on melanoma by autologous cytolytic T-lymphocytes. This is G antigen 4 from Homo sapiens (Human).